We begin with the raw amino-acid sequence, 246 residues long: uncharacterized protein (246 aa).

This is an uncharacterized protein from Borreliella burgdorferi (strain ATCC 35210 / DSM 4680 / CIP 102532 / B31) (Borrelia burgdorferi).